A 651-amino-acid polypeptide reads, in one-letter code: MHLEVIVQSYKKSKYYFSHTFYLYKFIVVNSPDMLHISQLGLFLGLFAIVMHSANLIKYTSDPLEAFKTVNRHNWSDEQREHFYDLRNLYTSFCQTNLSLDCFTQILTNVFSWDIRDSQCKSAVNLSPLQNLPRTETKIVLSSTAANKSIIASSFSLFYLLFATLSTYTADPPCVELLPFKILGAQLFDIKLTEESLRMAMSKFSNSNLTRSLTSFTSEIFFNYTSFVYFLLYNTTSCVPSNDQYFKQSPKPINVTTSFGRTIVNFDSILTTTPSSTSASLTSPHIPSTNIPTPEPPPVTKNSTKLHTDTIKVTPNTPTITTQTTESIKKIVKRSDFPRPMYTPTDIPTLTIRLNATIKTEQNTENPKSPPKPTNFENTTIRIPKTFESATVTTNATQKIESTTFTTIGIKEINGNTYSSPKNSIYLKSKSQQSTTKFTDAEHTTPILKFTTWQNTARTYMSHNTEVQNMTDRFQRTTLKSSNELPTIQTLSVTPKQKLPSNVTAKTEVHITNNALPSSNSSYSITEVTKEVKHTRMSASTHEEINHTEIAQITPILNAHTSEKSTTPQRSFTAETFLTTSSKPAILTWSNLLSTTPKEPLTNTSLRWTDHITTQLTTSNRTQSAKLTKANISSQTTNIYPQTITGRSTEV.

Residues 1–56 (MHLEVIVQSYKKSKYYFSHTFYLYKFIVVNSPDMLHISQLGLFLGLFAIVMHSANL) form the signal peptide. 7 N-linked (GlcNAc...) asparagine; by host glycosylation sites follow: Asn-74, Asn-97, Asn-147, Asn-208, Asn-223, Asn-234, and Asn-254. Positions 275 to 292 (SSTSASLTSPHIPSTNIP) are enriched in low complexity. Residues 275–303 (SSTSASLTSPHIPSTNIPTPEPPPVTKNS) are disordered. Asn-302, Asn-355, Asn-378, Asn-395, Asn-469, Asn-502, Asn-520, Asn-546, Asn-603, Asn-620, and Asn-631 each carry an N-linked (GlcNAc...) asparagine; by host glycan.

The protein belongs to the herpesviridae U47 family. In terms of assembly, part of a gH-gL-gO complex. Post-translationally, a shorter mature protein, gO-80K, is produced probably by proteolytic cleavage. In terms of processing, modified with high mannose-oligosaccharides. N-glycosylated with complex glycans.

It localises to the virion. It is found in the host cell membrane. In Homo sapiens (Human), this protein is 120 kDa Glycoprotein O (U47).